Consider the following 382-residue polypeptide: D-galactonate dehydratase (382 aa).

D183 is a Mg(2+) binding site. Residue H185 is the Proton donor of the active site. Mg(2+)-binding residues include E209 and E235. H285 serves as the catalytic Proton acceptor.

Belongs to the mandelate racemase/muconate lactonizing enzyme family. GalD subfamily. It depends on Mg(2+) as a cofactor.

The enzyme catalyses D-galactonate = 2-dehydro-3-deoxy-D-galactonate + H2O. The protein operates within carbohydrate acid metabolism; D-galactonate degradation; D-glyceraldehyde 3-phosphate and pyruvate from D-galactonate: step 1/3. Functionally, catalyzes the dehydration of D-galactonate to 2-keto-3-deoxy-D-galactonate. The protein is D-galactonate dehydratase of Escherichia fergusonii (strain ATCC 35469 / DSM 13698 / CCUG 18766 / IAM 14443 / JCM 21226 / LMG 7866 / NBRC 102419 / NCTC 12128 / CDC 0568-73).